We begin with the raw amino-acid sequence, 257 residues long: Ribonuclease HII (257 aa).

The region spanning 71 to 257 (SLIAGIDEVG…TSFEPIKSML (187 aa)) is the RNase H type-2 domain. A divalent metal cation is bound by residues Asp77, Glu78, and Asp172.

The protein belongs to the RNase HII family. The cofactor is Mn(2+). Mg(2+) is required as a cofactor.

The protein localises to the cytoplasm. It carries out the reaction Endonucleolytic cleavage to 5'-phosphomonoester.. Its function is as follows. Endonuclease that specifically degrades the RNA of RNA-DNA hybrids. This Streptococcus uberis (strain ATCC BAA-854 / 0140J) protein is Ribonuclease HII.